The following is a 286-amino-acid chain: MRLIVVSGQSGAGKSVALRVLEDLGYYCVDNLPVSLLTAFIQSVQGSQQNVAVSIDIRNLPKEPSLVQDVLDQLKQNNDVSMLFLDASKETLLKRYSETRRIHPLSLSQSKPSLAQAIELEKQLLGPLKEQADLLLDSSNQSLHELSETVRMRIEGRERKDLVMVFQSFGFKYGLPTDADYVFDVRFLPNPHWEPDLRPLTGLDAPIKSFLEGHSEVMELKQQIQKFFEYWLPMLEKNNRSYLTIAIGCTGGKHRSVYLTQQLGEYFAQLGHQVQLRHTSLEKQQS.

ATP is bound at residue 8–15; the sequence is GQSGAGKS. 56-59 serves as a coordination point for GTP; sequence DIRN.

The protein belongs to the RapZ-like family.

Its function is as follows. Displays ATPase and GTPase activities. This is Nucleotide-binding protein VC_2532 from Vibrio cholerae serotype O1 (strain ATCC 39315 / El Tor Inaba N16961).